The primary structure comprises 259 residues: Proteasome subunit alpha (259 aa).

It belongs to the peptidase T1A family. In terms of assembly, the 20S proteasome core is composed of 14 alpha and 14 beta subunits that assemble into four stacked heptameric rings, resulting in a barrel-shaped structure. The two inner rings, each composed of seven catalytic beta subunits, are sandwiched by two outer rings, each composed of seven alpha subunits. The catalytic chamber with the active sites is on the inside of the barrel. Has a gated structure, the ends of the cylinder being occluded by the N-termini of the alpha-subunits. Is capped at one or both ends by the proteasome regulatory ATPase, PAN.

It localises to the cytoplasm. The formation of the proteasomal ATPase PAN-20S proteasome complex, via the docking of the C-termini of PAN into the intersubunit pockets in the alpha-rings, triggers opening of the gate for substrate entry. Interconversion between the open-gate and close-gate conformations leads to a dynamic regulation of the 20S proteasome proteolysis activity. Component of the proteasome core, a large protease complex with broad specificity involved in protein degradation. In Methanococcus maripaludis (strain C5 / ATCC BAA-1333), this protein is Proteasome subunit alpha.